Reading from the N-terminus, the 112-residue chain is Nucleoid-associated protein FTN_1196 (112 aa).

The segment at 1 to 27 (MNFDMSKLMQQAQKMQEQMKKAQQERE) is disordered. Over residues 17–27 (EQMKKAQQERE) the composition is skewed to basic and acidic residues.

It belongs to the YbaB/EbfC family. As to quaternary structure, homodimer.

The protein resides in the cytoplasm. The protein localises to the nucleoid. Functionally, binds to DNA and alters its conformation. May be involved in regulation of gene expression, nucleoid organization and DNA protection. The polypeptide is Nucleoid-associated protein FTN_1196 (Francisella tularensis subsp. novicida (strain U112)).